A 59-amino-acid polypeptide reads, in one-letter code: MRKVAFKVNEDLLELLDKYAIKHGLSRSEVIREAIKNMVKEELEKDSIIVARVEKIRIW.

This is an uncharacterized protein from Acidianus hospitalis (AFV-1).